Here is a 758-residue protein sequence, read N- to C-terminus: 5-methyltetrahydropteroyltriglutamate--homocysteine methyltransferase (758 aa).

5-methyltetrahydropteroyltri-L-glutamate-binding positions include 17–20 and lysine 117; that span reads RELK. L-homocysteine is bound by residues 434-436 and glutamate 487; that span reads IGS. L-methionine-binding positions include 434–436 and glutamate 487; that span reads IGS. 5-methyltetrahydropteroyltri-L-glutamate contacts are provided by residues 518-519 and tryptophan 564; that span reads RC. Aspartate 602 serves as a coordination point for L-homocysteine. L-methionine is bound at residue aspartate 602. Glutamate 608 contributes to the 5-methyltetrahydropteroyltri-L-glutamate binding site. Residues histidine 644, cysteine 646, and glutamate 668 each contribute to the Zn(2+) site. Catalysis depends on histidine 697, which acts as the Proton donor. Cysteine 729 contacts Zn(2+).

This sequence belongs to the vitamin-B12 independent methionine synthase family. Zn(2+) serves as cofactor.

The catalysed reaction is 5-methyltetrahydropteroyltri-L-glutamate + L-homocysteine = tetrahydropteroyltri-L-glutamate + L-methionine. It functions in the pathway amino-acid biosynthesis; L-methionine biosynthesis via de novo pathway; L-methionine from L-homocysteine (MetE route): step 1/1. Catalyzes the transfer of a methyl group from 5-methyltetrahydrofolate to homocysteine resulting in methionine formation. This chain is 5-methyltetrahydropteroyltriglutamate--homocysteine methyltransferase, found in Yersinia pseudotuberculosis serotype O:1b (strain IP 31758).